The primary structure comprises 186 residues: MLIGLTGTPGTGKTSVSKLLEKKRQWKIIHLNELIKEEHLYTEVDEKRDSVVADMELVRSRLPELINEMEKEPANKVVILESHLAHYITDIVIVLRAYPPELKKRLEKRGYSEEKVNENAEAESIDLILAEAFEWCDKVFEINTTGRTAEETAGDVEKIIDSLLSGKEEQLQEYGPGSLDWIDSVP.

ATP contacts are provided by G10, G12, K13, T14, and S15. Positions 30–53 (HLNELIKEEHLYTEVDEKRDSVVA) are NMP. The tract at residues 108 to 118 (KRGYSEEKVNE) is LID. R109 is an ATP binding site.

The protein belongs to the adenylate kinase family. AK6 subfamily. In terms of assembly, interacts with uS11. Not a structural component of 40S pre-ribosomes, but transiently interacts with them by binding to uS11.

The enzyme catalyses AMP + ATP = 2 ADP. The catalysed reaction is ATP + H2O = ADP + phosphate + H(+). In terms of biological role, broad-specificity nucleoside monophosphate (NMP) kinase that catalyzes the reversible transfer of the terminal phosphate group between nucleoside triphosphates and monophosphates. Also has ATPase activity. Involved in the late maturation steps of the 30S ribosomal particles, specifically 16S rRNA maturation. While NMP activity is not required for ribosome maturation, ATPase activity is. Associates transiently with small ribosomal subunit protein uS11. ATP hydrolysis breaks the interaction with uS11. May temporarily remove uS11 from the ribosome to enable a conformational change of the ribosomal RNA that is needed for the final maturation step of the small ribosomal subunit. The chain is Putative adenylate kinase from Methanosarcina acetivorans (strain ATCC 35395 / DSM 2834 / JCM 12185 / C2A).